The sequence spans 529 residues: DnaJ homolog l(2)tid, mitochondrial (529 aa).

A mitochondrion-targeting transit peptide spans 1–22 (MISCKNLCVLRQLPLKNCRRHY). Residue R35 is modified to Omega-N-methylarginine. The J domain occupies 80 to 145 (DYYATLGVAK…QKRREYDTYG (66 aa)). K121 is subject to N6-acetyllysine. The CR-type zinc-finger motif lies at 230-308 (GVNKDVNVNV…CEGKGQTVQR (79 aa)). Positions 243, 246, 260, 263, 282, 285, 296, and 299 each coordinate Zn(2+). The stretch at 243 to 250 (CPKCAGSK) is one CXXCXGXG motif; approximate repeat. The CXXCXGXG motif repeat unit spans residues 260–267 (CQYCNGTG). One copy of the CXXCXGXG motif; approximate repeat lies at 282 to 289 (CRYCQGTR). The stretch at 296 to 303 (CAECEGKG) is one CXXCXGXG motif repeat. The segment at 441–529 (TPGQIHGMAQ…FLNKIKSMFN (89 aa)) is disordered. Positions 497–508 (QSEKSETRRKDQ) are enriched in basic and acidic residues.

The protein localises to the mitochondrion outer membrane. Functionally, may act as a tumor suppressor in larval imaginal disks. This is DnaJ homolog l(2)tid, mitochondrial (l(2)tid) from Drosophila virilis (Fruit fly).